We begin with the raw amino-acid sequence, 63 residues long: MVFQLVCSTCGKDISHERYKLIIRKKSLKDVLVSVKNECCRLKLSTQIEPQRNLTVQPLLDIN.

The protein belongs to the poxviridae DNA-directed RNA polymerase 7 kDa subunit family. The DNA-dependent RNA polymerase (vRNAP) consists of eight subunits encoded by early viral genes and termed according to their apparent molecular masses Rpo147, Rpo132, Rpo35, Rpo30, Rpo22, Rpo19, Rpo18, and Rpo7. The same holoenzyme, with the addition of the transcription-specificity factor RAP94, is used for early gene expression.

It is found in the virion. It carries out the reaction RNA(n) + a ribonucleoside 5'-triphosphate = RNA(n+1) + diphosphate. In terms of biological role, part of the DNA-dependent RNA polymerase which catalyzes the transcription of viral DNA into RNA using the four ribonucleoside triphosphates as substrates. Responsible for the transcription of early, intermediate and late genes. DNA-dependent RNA polymerase associates with the early transcription factor (ETF), itself composed of OPG118 and OPG134, thereby allowing the early genes transcription. Late transcription, and probably also intermediate transcription, require newly synthesized RNA polymerase. The sequence is that of DNA-directed RNA polymerase 7 kDa subunit (OPG090) from Monkeypox virus.